A 184-amino-acid chain; its full sequence is Ribose 1,5-bisphosphate phosphokinase PhnN (184 aa).

ATP is bound at residue 11 to 18 (GPSGAGKD).

The protein belongs to the ribose 1,5-bisphosphokinase family.

The catalysed reaction is alpha-D-ribose 1,5-bisphosphate + ATP = 5-phospho-alpha-D-ribose 1-diphosphate + ADP. The protein operates within metabolic intermediate biosynthesis; 5-phospho-alpha-D-ribose 1-diphosphate biosynthesis; 5-phospho-alpha-D-ribose 1-diphosphate from D-ribose 5-phosphate (route II): step 3/3. Functionally, catalyzes the phosphorylation of ribose 1,5-bisphosphate to 5-phospho-D-ribosyl alpha-1-diphosphate (PRPP). This Burkholderia mallei (strain SAVP1) protein is Ribose 1,5-bisphosphate phosphokinase PhnN.